The primary structure comprises 658 residues: Katanin p80 WD40 repeat-containing subunit B1 (658 aa).

The tract at residues 1–284 (MATPVVTKTA…VADLAICNDQ (284 aa)) is interaction with dynein. An interaction with centrosomes region spans residues 1 to 300 (MATPVVTKTA…SQSNVSSYVV (300 aa)). WD repeat units lie at residues 18–58 (AHAS…CIMS), 61–100 (GHTSPVESVRLNTPEELIVAGSQSGSIRVWDLEAAKILRT), 103–142 (GHKANICSLDFHPYGEFVASGSQDTNIKLWDIRRKGCVFR), 145–184 (GHSQAVRCLRFSPDGKWLASAADDHTVKLWDLTAGKMMSE), 187–226 (GHTGPVNVVEFHPNEYLLASGSSDRTIRFWDLEKFQVVSC), and 229–269 (GEPG…DVVL). Residues 285–437 (LIGVAFSQSN…LPQLPVPNLE (153 aa)) are interaction with PAFAH1B1. Residues 311 to 329 (VTQDPVQANQPLTQQTPNP) are compositionally biased toward polar residues. 2 disordered regions span residues 311–419 (VTQD…EVSK) and 434–458 (PNLEVPARPSVMTSTPAPKGEPDII). The span at 352-374 (HNSESERRSPSSEDDRDERESRA) shows a compositional bias: basic and acidic residues. Residue Thr-395 is modified to Phosphothreonine. The segment at 436–658 (LEVPARPSVM…ELHLLMASLD (223 aa)) is interaction with KATNA1 and NDEL1.

The protein belongs to the WD repeat KATNB1 family. As to quaternary structure, interacts with KATNA1. This interaction enhances the microtubule binding and severing activity of KATNA1 and also targets this activity to the centrosome. This interaction is weakly competed by KATNBL1 which has a lower affinity for it. Interacts with ASPM; the katanin complex formation KATNA1:KATNB1 is required for the association of ASPM. Interacts with dynein, microtubules, NDEL1 and PAFAH1B1. Interacts with KATNAL1; this interaction is weakly competed by KATNBL1 which has a lower affinity for it. Interacts with CAMSAP2 and CAMSAP3; leading to regulate the length of CAMSAP-decorated microtubule stretches.

It is found in the cytoplasm. The protein localises to the cytoskeleton. Its subcellular location is the microtubule organizing center. The protein resides in the centrosome. It localises to the spindle pole. It is found in the spindle. In terms of biological role, participates in a complex which severs microtubules in an ATP-dependent manner. May act to target the enzymatic subunit of this complex to sites of action such as the centrosome. Microtubule severing may promote rapid reorganization of cellular microtubule arrays and the release of microtubules from the centrosome following nucleation. Microtubule release from the mitotic spindle poles may allow depolymerization of the microtubule end proximal to the spindle pole, leading to poleward microtubule flux and poleward motion of chromosome. The function in regulating microtubule dynamics at spindle poles seems to depend on the association of the katanin KATNA1:KATNB1 complex with ASPM which recruits it to microtubules. Reversely KATNA1:KATNB1 can enhance ASPM blocking activity on microtubule minus-end growth. Microtubule release within the cell body of neurons may be required for their transport into neuronal processes by microtubule-dependent motor proteins. This transport is required for axonal growth. The polypeptide is Katanin p80 WD40 repeat-containing subunit B1 (Katnb1) (Mus musculus (Mouse)).